The primary structure comprises 184 residues: Adenine phosphoribosyltransferase (184 aa).

The protein belongs to the purine/pyrimidine phosphoribosyltransferase family. In terms of assembly, homodimer.

The protein resides in the cytoplasm. The enzyme catalyses AMP + diphosphate = 5-phospho-alpha-D-ribose 1-diphosphate + adenine. Its pathway is purine metabolism; AMP biosynthesis via salvage pathway; AMP from adenine: step 1/1. Functionally, catalyzes a salvage reaction resulting in the formation of AMP, that is energically less costly than de novo synthesis. In Shewanella baltica (strain OS223), this protein is Adenine phosphoribosyltransferase.